The following is a 624-amino-acid chain: Chromosomal replication initiator protein DnaA (624 aa).

The interval methionine 1–alanine 99 is domain I, interacts with DnaA modulators. The segment at aspartate 88–arginine 284 is disordered. The tract at residues proline 100–alanine 283 is domain II. Over residues methionine 102–histidine 112 the composition is skewed to low complexity. Composition is skewed to basic and acidic residues over residues glutamine 118–proline 141 and glycine 176–alanine 206. Positions proline 250 to valine 264 are enriched in gly residues. The interval arginine 284–alanine 500 is domain III, AAA+ region. ATP contacts are provided by glycine 328, glycine 330, lysine 331, and threonine 332. A domain IV, binds dsDNA region spans residues serine 501–glycine 624.

The protein belongs to the DnaA family. Oligomerizes as a right-handed, spiral filament on DNA at oriC.

It is found in the cytoplasm. Plays an essential role in the initiation and regulation of chromosomal replication. ATP-DnaA binds to the origin of replication (oriC) to initiate formation of the DNA replication initiation complex once per cell cycle. Binds the DnaA box (a 9 base pair repeat at the origin) and separates the double-stranded (ds)DNA. Forms a right-handed helical filament on oriC DNA; dsDNA binds to the exterior of the filament while single-stranded (ss)DNA is stabiized in the filament's interior. The ATP-DnaA-oriC complex binds and stabilizes one strand of the AT-rich DNA unwinding element (DUE), permitting loading of DNA polymerase. After initiation quickly degrades to an ADP-DnaA complex that is not apt for DNA replication. Binds acidic phospholipids. Functionally, the DnaA box consensus is 5'-(T/C)(T/C)(G/AC)TCCACA-3'. In Streptomyces anulatus (Streptomyces chrysomallus), this protein is Chromosomal replication initiator protein DnaA.